The sequence spans 505 residues: MEEFQGHRELYRSWQHNFFYPLIFQEYIYTFAYDRGLNKLILLENVVDQRYSLLTVKRLITRLYHQNHLILSVNDSNQNEIFGHKPKKNLYSQMITEGFAVIVEIPFSLLLISSLDGKEKKIGKSTNLQSIHSIFPFLEDKFLYLNYVLDILIPYPTHLEILVQTLRYWLKDASSLHLLRFFLYECRNWTSRITSKESISFLKKRNRRLFLFLYNFYVCEYEYFFVSLRNQSSYLRSTSFGALLERIHFYGKFKYLVKVKDFAVILWFFKEPFPHYVRYQGKALLASKGTSLLMHKWKYYFIYFWQCYFSVWSQPRRIYINQLSNYSLDFMGFLSNVRFNSSVIRSQMLENSFLLENIRKKFDTIVPISPLVGSLAKAKFCNVLGHPIGKSVWTDLSDSDIIDRFGRICRNLSHYYSGSSRKKNLYRIKYILRLSCARTLSRKHKSTVRAFLKRLGSEFLEEFFTEEEKVLSLILPRDSSTSGGLYRGRVWYLDIICIHNLVNDQ.

Belongs to the intron maturase 2 family. MatK subfamily.

It localises to the plastid. Its subcellular location is the chloroplast. In terms of biological role, usually encoded in the trnK tRNA gene intron. Probably assists in splicing its own and other chloroplast group II introns. The chain is Maturase K from Froelichia floridana (Florida snake-cotton).